A 146-amino-acid chain; its full sequence is D-aminoacyl-tRNA deacylase (146 aa).

The Gly-cisPro motif, important for rejection of L-amino acids signature appears at 138-139 (GP).

It belongs to the DTD family. In terms of assembly, homodimer.

It localises to the cytoplasm. It carries out the reaction glycyl-tRNA(Ala) + H2O = tRNA(Ala) + glycine + H(+). The catalysed reaction is a D-aminoacyl-tRNA + H2O = a tRNA + a D-alpha-amino acid + H(+). Its function is as follows. An aminoacyl-tRNA editing enzyme that deacylates mischarged D-aminoacyl-tRNAs. Also deacylates mischarged glycyl-tRNA(Ala), protecting cells against glycine mischarging by AlaRS. Acts via tRNA-based rather than protein-based catalysis; rejects L-amino acids rather than detecting D-amino acids in the active site. By recycling D-aminoacyl-tRNA to D-amino acids and free tRNA molecules, this enzyme counteracts the toxicity associated with the formation of D-aminoacyl-tRNA entities in vivo and helps enforce protein L-homochirality. This chain is D-aminoacyl-tRNA deacylase, found in Xanthomonas euvesicatoria pv. vesicatoria (strain 85-10) (Xanthomonas campestris pv. vesicatoria).